Here is a 93-residue protein sequence, read N- to C-terminus: Phosphoribosyl-ATP pyrophosphatase (93 aa).

It belongs to the PRA-PH family.

Its subcellular location is the cytoplasm. It catalyses the reaction 1-(5-phospho-beta-D-ribosyl)-ATP + H2O = 1-(5-phospho-beta-D-ribosyl)-5'-AMP + diphosphate + H(+). It functions in the pathway amino-acid biosynthesis; L-histidine biosynthesis; L-histidine from 5-phospho-alpha-D-ribose 1-diphosphate: step 2/9. The polypeptide is Phosphoribosyl-ATP pyrophosphatase (Mycobacterium avium (strain 104)).